A 355-amino-acid chain; its full sequence is Guanine nucleotide-binding protein G(i) subunit alpha-2 (355 aa).

The N-myristoyl glycine moiety is linked to residue Gly-2. Residue Cys-3 is the site of S-palmitoyl cysteine attachment. The region spanning Arg-32–Phe-355 is the G-alpha domain. A G1 motif region spans residues Lys-35–Thr-48. GTP-binding positions include Gly-40 to Ser-47, Leu-176 to Thr-182, Asp-201 to Gln-205, Asn-270 to Asp-273, and Ala-327. The Mg(2+) site is built by Ser-47 and Thr-182. Residues Asp-174–Thr-182 form a G2 motif region. The interval Phe-197–Arg-206 is G3 motif. Residues Ile-266–Asp-273 form a G4 motif region. Positions Thr-325 to Thr-330 are G5 motif.

It belongs to the G-alpha family. G(i/o/t/z) subfamily. G proteins are composed of 3 units; alpha, beta and gamma. The alpha chain contains the guanine nucleotide binding site. In this context, interacts with GNB2. Interacts with UNC5B. Interacts with GPSM1. Interacts with RGS12 and RGS14. Interacts (inactive GDP-bound form) with NUCB1 (via GBA motif); the interaction leads to activation of GNAI3. Interacts (inactive GDP-bound form) with CCDC88C/DAPLE (via GBA motif). Interacts (inactive GDP-bound form) with CCDC8A/GIV (via GBA motif). Interacts with CXCR1 and CXCR2.

The protein resides in the cytoplasm. It localises to the cytoskeleton. Its subcellular location is the microtubule organizing center. The protein localises to the centrosome. It is found in the cell membrane. The protein resides in the membrane. Functionally, guanine nucleotide-binding proteins (G proteins) are involved as modulators or transducers in various transmembrane signaling systems. The G(i) proteins are involved in hormonal regulation of adenylate cyclase: they inhibit the cyclase in response to beta-adrenergic stimuli. May play a role in cell division. The polypeptide is Guanine nucleotide-binding protein G(i) subunit alpha-2 (Gnai2) (Mus musculus (Mouse)).